A 1513-amino-acid polypeptide reads, in one-letter code: MASSENEPFCVKFIKSPENSEYFFKAYEAIKQIQSDESLQLTEEREALLLKEKDKSLYICDPFSGAAFSHLKKLGCRIVGPQVVIFCMENQRRVPRAEYPVYNMAMADVTISCTSLDKETREDVHHYVQIMGGCVYRDLNVSVTHLIAGEVGSKKYLVAASLEKPILLPSWVKELWEKSNQRIIRYSDVNMTEYLCPIFRGCTICVTGLSSLDRKEVQRLTALHGGEYTGQLKMNESTHLIVQEAKGQKYECARKWNVHCISVQWFFDSIEKGFCQDETMYKIEPASTIKSVPDTSTPTGGNSKPNSRTLYDVSQISNISTSCVNESAFNSAMASRLDPPADTLENLDISSLQAPDDLLDGCRIYLCGFGGRKLDKLRKLINNGGGVRFNQLTGDVTHIIVGETDEELKQFLNKTQHRPYVLTVKWLLDSFAKGHLQPEEIYFHSSYQQTEMPSPFEPAINLTANKMSSTRDPLNHTRNHQADEDLLSQYTENNSTLIEDEHPKTSNTNSISQMSMHEDMTTCTSQSGLADTSTIIEGGLFSRKQFMVLGFLEEDEACIIDIIKKSAGKVLSSQKRAIADYAVVPLLGCEVESTVGEVVTNAWLGMCIEQEKLLDPHSNALFTPVPFLEGSTPLRECVLSVSQFMGAERDSLVYLAGLLGAKVQEFFVRKANPKKGMFASTHLVLKDAEGSKYEAAKKWNLPAVTMNWLLQCARTGRKADEDSYLVDNVPEEDKDESFISQTYKPQAIRLSMHAPCHLENHPEALTKAAVTPLDMNRFKSKAFQSVISQHNKNPQTSGGESKVLQREPSLHLDTPSKFLSKDKLFKPSFDVKDALAALETPGGPNQKNRTQSTPLSEVIGRNLQLAIANSTRQTAAVTASPQLKAAEKKEFDNSKLLINVVICVSKKLIKKQGELNGIAASLGAEYRWCFDESVTHFIYHGRQNDMSREYKSVKERSGIYIVSEHWLFACSEQQKRVPEALYPHTYNPKMSLDISAVQDGSYTASKFSADTSLQQDENSELQLQQNNKFGETSDDQVKKAAGDGNPQNPSKDVKGALTQTLEMRENFQRQLQEFMSATSVVKPRGSVGRAGFDNSPCTPEGARSTRNGRSRVLEALRQSRQAMTDLNTEPSQNEQIIWDDPTAREERAKLVSNLQWPDSPSQYSEQLQHNMNDAGGNYTPAKESLTDTEIAELEACEFEPKSAMRTPVIENNLQSPTKPDHLTPTPQAPSIAFPLANPPVAPQPREKPVQPFSKEETLKERRFQLSSLDPQERIDYSQLIEELGGVVIEKQCFDPSCTHIVVGHPLRNEKYLASMAAGKWVLHRSYLEACRAAKRFIQEEDYEWGSMSILSAVTNINPQQRMLAEAAMRWRKKLQGIKQNMGIAEGAFSGWKVILNVDQTKEPGFKRLLQSGGAKVFAGHSSPLFKEASHLFADFSKLKPDEPRVNVAEAAAQGVNCLKPEYIADYLMKELPPPMNNYCLPDAIPYVRVTGTGLSRKRKTSGDVSDVKRSRHY.

BRCT domains are found at residues 101–189 (VYNM…YSDV) and 194–283 (YLCP…MYKI). The tract at residues 289-308 (IKSVPDTSTPTGGNSKPNSR) is disordered. BRCT domains lie at 354–444 (APDD…IYFH), 530–621 (ADTS…SNAL), and 629–726 (EGST…SYLV). The span at 789-799 (QHNKNPQTSGG) shows a compositional bias: polar residues. The tract at residues 789–809 (QHNKNPQTSGGESKVLQREPS) is disordered. The short motif at 844 to 850 (PNQKNRT) is the Nuclear localization signal element. The BRCT 6 domain occupies 892 to 984 (DNSKLLINVV…KRVPEALYPH (93 aa)). Disordered stretches follow at residues 1031–1053 (ETSD…SKDV) and 1086–1109 (SVGR…RNGR). Position 1131 is a phosphoserine (Ser1131). BRCT domains are found at residues 1253–1344 (SKEE…DYEW) and 1383–1480 (IAEG…NYCL). The Nuclear localization signal signature appears at 1508–1511 (KRSR).

The protein belongs to the TOPBP1 family. Interacts with cdc45. Interacts (via BRCT domains) with ticrr; interaction is cdk2-dependent. Interacts with atr in the presence of atrip. Interacts with recql4 (via N-terminus). Interacts with gmnc. Interacts with cip2a; forming the CIP2A-TOPBP1 complex. Phosphorylation at Ser-1131 is essential for phosphorylation of chek1, and thus for checkpoint regulation.

The protein resides in the nucleus. It is found in the chromosome. The protein localises to the cytoplasm. It localises to the cytoskeleton. Its subcellular location is the microtubule organizing center. The protein resides in the centrosome. It is found in the spindle pole. In terms of biological role, scaffold protein that acts as a key protein-protein adapter in DNA replication and DNA repair. Composed of multiple BRCT domains, which specifically recognize and bind phosphorylated proteins, bringing proteins together into functional combinations. Required for DNA replication initiation but not for the formation of pre-replicative complexes or the elongation stages. Necessary for the loading of replication factors onto chromatin, including gmnc, cdc45, DNA polymerases and components of the GINS complex such as ginsl/sld5. Plays a central role in DNA repair by bridging proteins and promoting recruitment of proteins to DNA damage sites. Involved in double-strand break (DSB) repair via homologous recombination in S-phase by promoting the exchange between the DNA replication factor A (RPA) complex and RAD51. Involved in microhomology-mediated end-joining (MMEJ) DNA repair by promoting recruitment of polymerase theta (POLQ) to DNA damage sites during mitosis. In response to DNA damage, triggers the recruitment of checkpoint signaling proteins on chromatin, which activate the chek1 signaling pathway and block S-phase progression. Increases the kinase activity of atr to numerous substrates, and is required for the phosphorylation of Rad1. Together with cip2a, plays an essential role in the response to genome instability generated by the presence of acentric chromosome fragments derived from shattered chromosomes within micronuclei. The CIP2A-TOPBP1 complex tethers chromosome fragments during mitosis to ensure clustered segregation of the fragments to a single daughter cell nucleus, facilitating re-ligation with limited chromosome scattering and loss. The sequence is that of DNA topoisomerase 2-binding protein 1-A (topbp1-A) from Xenopus laevis (African clawed frog).